A 284-amino-acid polypeptide reads, in one-letter code: Bifunctional protein FolD (284 aa).

Residues 165 to 167 (GRS), Ser-190, and Val-231 contribute to the NADP(+) site.

The protein belongs to the tetrahydrofolate dehydrogenase/cyclohydrolase family. As to quaternary structure, homodimer.

The catalysed reaction is (6R)-5,10-methylene-5,6,7,8-tetrahydrofolate + NADP(+) = (6R)-5,10-methenyltetrahydrofolate + NADPH. It catalyses the reaction (6R)-5,10-methenyltetrahydrofolate + H2O = (6R)-10-formyltetrahydrofolate + H(+). It participates in one-carbon metabolism; tetrahydrofolate interconversion. In terms of biological role, catalyzes the oxidation of 5,10-methylenetetrahydrofolate to 5,10-methenyltetrahydrofolate and then the hydrolysis of 5,10-methenyltetrahydrofolate to 10-formyltetrahydrofolate. The polypeptide is Bifunctional protein FolD (Brevibacillus brevis (strain 47 / JCM 6285 / NBRC 100599)).